The chain runs to 72 residues: Prokaryotic ubiquitin-like protein Pup (72 aa).

Gly residues predominate over residues 1-10; the sequence is MATRDSGGGQ. The segment at 1-41 is disordered; that stretch reads MATRDSGGGQQHTNRHADEVEEVAAEGNDASDLKERHEKLS. Residues 21 to 61 are a coiled coil; the sequence is EEVAAEGNDASDLKERHEKLSEDVDSLLDEIDDVLEENAEE. Residues 28 to 66 form an ARC ATPase binding region; it reads NDASDLKERHEKLSEDVDSLLDEIDDVLEENAEEFVKGY. Residues 31 to 41 show a composition bias toward basic and acidic residues; the sequence is SDLKERHEKLS. E72 is covalently cross-linked (Isoglutamyl lysine isopeptide (Glu-Lys) (interchain with K-? in acceptor proteins)).

Belongs to the prokaryotic ubiquitin-like protein family. Strongly interacts with the proteasome-associated ATPase ARC through a hydrophobic interface; the interacting region of Pup lies in its C-terminal half. There is one Pup binding site per ARC hexamer ring.

It functions in the pathway protein degradation; proteasomal Pup-dependent pathway. Functionally, protein modifier that is covalently attached to lysine residues of substrate proteins, thereby targeting them for proteasomal degradation. The tagging system is termed pupylation. The protein is Prokaryotic ubiquitin-like protein Pup of Frankia alni (strain DSM 45986 / CECT 9034 / ACN14a).